We begin with the raw amino-acid sequence, 885 residues long: DNA mismatch repair protein MutS (885 aa).

626–633 (GPNMGGKS) lines the ATP pocket.

The protein belongs to the DNA mismatch repair MutS family.

Functionally, this protein is involved in the repair of mismatches in DNA. It is possible that it carries out the mismatch recognition step. This protein has a weak ATPase activity. This is DNA mismatch repair protein MutS from Burkholderia cenocepacia (strain HI2424).